The primary structure comprises 133 residues: Protein archease (133 aa).

Positions 11, 132, and 133 each coordinate Ca(2+).

Belongs to the archease family.

Functionally, activates the tRNA-splicing ligase complex by facilitating the enzymatic turnover of catalytic subunit RtcB. Acts by promoting the guanylylation of RtcB, a key intermediate step in tRNA ligation. Can also alter the NTP specificity of RtcB such that ATP, dGTP or ITP is used efficiently. This is Protein archease from Thermoplasma volcanium (strain ATCC 51530 / DSM 4299 / JCM 9571 / NBRC 15438 / GSS1).